The following is a 570-amino-acid chain: Dihydroxy-acid dehydratase (570 aa).

Cys-61 lines the [2Fe-2S] cluster pocket. Asp-94 provides a ligand contact to Mg(2+). Cys-135 is a binding site for [2Fe-2S] cluster. Mg(2+) is bound by residues Asp-136 and Lys-137. Lys-137 bears the N6-carboxylysine mark. Cys-207 contributes to the [2Fe-2S] cluster binding site. Residue Glu-459 coordinates Mg(2+). Ser-485 serves as the catalytic Proton acceptor.

It belongs to the IlvD/Edd family. In terms of assembly, homodimer. [2Fe-2S] cluster serves as cofactor. Mg(2+) is required as a cofactor.

It catalyses the reaction (2R)-2,3-dihydroxy-3-methylbutanoate = 3-methyl-2-oxobutanoate + H2O. The enzyme catalyses (2R,3R)-2,3-dihydroxy-3-methylpentanoate = (S)-3-methyl-2-oxopentanoate + H2O. Its pathway is amino-acid biosynthesis; L-isoleucine biosynthesis; L-isoleucine from 2-oxobutanoate: step 3/4. It functions in the pathway amino-acid biosynthesis; L-valine biosynthesis; L-valine from pyruvate: step 3/4. Its function is as follows. Functions in the biosynthesis of branched-chain amino acids. Catalyzes the dehydration of (2R,3R)-2,3-dihydroxy-3-methylpentanoate (2,3-dihydroxy-3-methylvalerate) into 2-oxo-3-methylpentanoate (2-oxo-3-methylvalerate) and of (2R)-2,3-dihydroxy-3-methylbutanoate (2,3-dihydroxyisovalerate) into 2-oxo-3-methylbutanoate (2-oxoisovalerate), the penultimate precursor to L-isoleucine and L-valine, respectively. The protein is Dihydroxy-acid dehydratase of Lactococcus lactis subsp. lactis (strain IL1403) (Streptococcus lactis).